The primary structure comprises 335 residues: Heme A synthase (335 aa).

A run of 8 helical transmembrane segments spans residues 9-29 (VAIW…IGGF), 90-110 (YVHR…FIYF), 120-140 (VVIR…TGWY), 156-176 (MLTL…YQFF), 197-217 (VGII…VAGL), 255-275 (VQFI…VLTI), 283-303 (VYVM…TLLL), and 309-329 (IAIS…CFLC). H259 contacts heme. Heme is bound at residue H313.

The protein belongs to the COX15/CtaA family. Type 2 subfamily. In terms of assembly, interacts with CtaB. Heme b serves as cofactor.

The protein localises to the cell membrane. The enzyme catalyses Fe(II)-heme o + 2 A + H2O = Fe(II)-heme a + 2 AH2. It participates in porphyrin-containing compound metabolism; heme A biosynthesis; heme A from heme O: step 1/1. Catalyzes the conversion of heme O to heme A by two successive hydroxylations of the methyl group at C8. The first hydroxylation forms heme I, the second hydroxylation results in an unstable dihydroxymethyl group, which spontaneously dehydrates, resulting in the formyl group of heme A. In Wolbachia sp. subsp. Brugia malayi (strain TRS), this protein is Heme A synthase.